Here is a 250-residue protein sequence, read N- to C-terminus: ATP synthase subunit a (250 aa).

6 helical membrane-spanning segments follow: residues F26–L46, F84–F104, I114–Y134, L143–I163, F193–I213, and V216–L236.

It belongs to the ATPase A chain family. In terms of assembly, F-type ATPases have 2 components, CF(1) - the catalytic core - and CF(0) - the membrane proton channel. CF(1) has five subunits: alpha(3), beta(3), gamma(1), delta(1), epsilon(1). CF(0) has three main subunits: a(1), b(2) and c(9-12). The alpha and beta chains form an alternating ring which encloses part of the gamma chain. CF(1) is attached to CF(0) by a central stalk formed by the gamma and epsilon chains, while a peripheral stalk is formed by the delta and b chains.

Its subcellular location is the cell inner membrane. Functionally, key component of the proton channel; it plays a direct role in the translocation of protons across the membrane. This is ATP synthase subunit a from Sinorhizobium fredii (strain NBRC 101917 / NGR234).